The primary structure comprises 65 residues: Ferredoxin-1 (65 aa).

Residues 3 to 31 enclose the 4Fe-4S ferredoxin-type domain; the sequence is RKFYVDQDECIACESCVEIAPGAFAMDPE. Residues Cys12, Cys15, Cys18, and Cys55 each contribute to the [4Fe-4S] cluster site.

Homodimer. It depends on [4Fe-4S] cluster as a cofactor.

In terms of biological role, ferredoxins are iron-sulfur proteins that transfer electrons in a wide variety of metabolic reactions. The protein is Ferredoxin-1 (fd1) of Desulfocurvibacter africanus (Desulfovibrio africanus).